Consider the following 923-residue polypeptide: MDYKQTLLMPKTAFPMRGNLPNSEPKRQEQWEEMDIYKQVQERTEGRPYFVLHDGPPYANGDIHMGHALNKIIKDFIVRYKSMSGFHAPYVPGWDTHGLPIETALTKNKKVDRKSMSIADFRKLCEEYALEQINSQRQQFMRLGVRGDWWKPYITLEKEFEAEQIKVFGKMAKKGYIYKGKKPVYWSPSSESALAEAEIEYYDKRSASIYVAFQVADGKGVLPEDAALVIWTTTPWTIPANLGITVHPQLEYSVVRTGGRSFVVASGLLEHVQTELSWEDVVVEKTVTGKELDYIVCRHPFYDRDSIVMNGEHVTLDAGTGCVHTAPGHGVDDFVVGQKYGLDVLCPIDDKGIMTSEAPGFEGEFYDNINKMVTEKLEAVGALLKLGFITHSYPHDWRTKKPVIFRATSQWFASIANIRKELLQAVANTEWIPAWGETRLHNMVRDRGDWCISRQRAWGVPIPVFYGEDGTEIVSEETIEHVSNLFREHGSNVWFEREAKDLLPPGFTSPHSPNGHFTKETDIMDVWFDSGSSHQGVLRERNDLVFPADLYFEGSDQYRGWFNSSLSTSVAINGVAPYKGVLSHGFVMDGEGKKMSKSLGNIVVPNTVMKQLGADILRLWVASVDYQADSRVSDSILKQVAETYRKIRNTFRFLLGNLHDFDPKINAVPRDQLTGVHAFLLVRLNELTKRMHEGYNEYQFLNVYNHFRNFCTVELSSFYMDISKDTLYIEHADHPERRAFQTVMYEVVTALTKLIAPILPHTADEVWENIPGVSEQSVQLTDMPTAEELSGTDELKAHWQAFMDIRADVLKALEVARNEKVIGKSLQASLTLYPNKQARALLEATEGLKKLFIVSNVQIANEGDEVPAAAQQFADVAVLVEKAEGETCERCWQVSNTVGADEKHPTLCLSCAQTVTNHYNDVV.

The 'HIGH' region motif lies at 57 to 67 (PYANGDIHMGH). Residue E553 participates in L-isoleucyl-5'-AMP binding. Positions 594-598 (KMSKS) match the 'KMSKS' region motif. K597 serves as a coordination point for ATP. Positions 888, 891, 908, and 911 each coordinate Zn(2+).

The protein belongs to the class-I aminoacyl-tRNA synthetase family. IleS type 1 subfamily. As to quaternary structure, monomer. The cofactor is Zn(2+).

The protein localises to the cytoplasm. The catalysed reaction is tRNA(Ile) + L-isoleucine + ATP = L-isoleucyl-tRNA(Ile) + AMP + diphosphate. Its function is as follows. Catalyzes the attachment of isoleucine to tRNA(Ile). As IleRS can inadvertently accommodate and process structurally similar amino acids such as valine, to avoid such errors it has two additional distinct tRNA(Ile)-dependent editing activities. One activity is designated as 'pretransfer' editing and involves the hydrolysis of activated Val-AMP. The other activity is designated 'posttransfer' editing and involves deacylation of mischarged Val-tRNA(Ile). This is Isoleucine--tRNA ligase from Shouchella clausii (strain KSM-K16) (Alkalihalobacillus clausii).